The primary structure comprises 2352 residues: MLFFSIPTILLIFFLFIQIITAAFLTDENEPWNLNRNWTAQKILDYSAEWNSHEYFPSPSNWRALPFYTIILDKWTNGVPENDVAEDTVFESDPYEVTFRAGGDIVGLVTPRSLDYLESMGIKAVYIAGTPFQNLPWYPDGYSPLDFTLLDKHTGTLNQWHEAIMKLHERGFYVVVDFTISTLSELSYFVNSSMSFANTSAPFSTKGYKMKYKHPEYHYTDFQLSNGSSYSCNAPTFWDVTGLPINNTEDLNSISEVMCLSGDFDHYGDVEAFGNHPPWWRQLSNFASVQDRLRDWDPIVAKKLKHLGCLAVKMLDIDGIRVDKATQITADFLGDWSAYIRQCAREIGKENFFIPGEVTSGADFGSIYVGRGRQADQRPNNREIALQTGYNESKYFLRKESDSALDSVSFHYSVYRTLTLLLGLQGELFAAFDLNRHDFAAMWNQMLIQDDMINANTKKFDPRHLYGLTNQDIFRWPSIKDGRFKQLLGLFVVHLLMPGIPLIYYGEEQNLKLLDNQAANYIFGRQPITSSIGWQKHGCYQIGTTQYTDLDFGPASEACRDDWNSLDHLDPTSPTKHYIARMNEIRSYFPQVRDGWDLKLIGKWTHEGTFPGNELYGESNPTTWGLWSMIRGPLAPYQKFSDQNDYIWLIFTNENTTKTYDMDCMRQVDNKFPPYPALLGPYSSGSTVKNLLYPYEEIDLSTSTIDSPDIGNIGCIPHLTIDAYGSKIFVKKEDWIRPSLYLTKFLPGHDSRIYSATEVTSFKISLGFSEEVDCKDLFKRIGFNSRTLNSSFAPKILEDSISCGYLDQPAPQEYTNAPVTKWFFNATLDSVPNGMHELLLNEVKSTSNQTMQSKIARLIFRVGNEENPLVYPNNATFSPSLLYKASNGDLYVNHTGAGADKYRFSLNYGGTYSKWKTVSTPSEKLRKPTWNGTNLQKWDGDHLIVQYWSSIALSTAHVQHGDTLNYSRQFPNLFVQGAFNRFGYDGSMPSKMSYNLENRTWSYDLISTWPAELVLNVWGMNPDNNADQGWVYGDLDNDTIIDRVPPGSSRISNFIRFLDPPPKPYLSYKMYLNDFTRQLHYIPKGSWTVQIVAIVLLILLPPLFGIFSVALYSGAFSRVTIFNGSHNRGIKVAKQKIKSIMSRIFPFSVHLPLDNSSELLKQLPESEKRLNVLVATLEYDVPDLGIRVKIGGLGVMAQLMGQHMEFQDMVWVVPIISGVEYPFDKLCTEPKIAVKIGDDEFVVNCYSYKSGNITYVFLQSEVFYKQSSKEPYPLKMDDLASAIFYSVWNQCIAEVWKRFPLDIYHVNDYHGALAPLYLLPEVIPVAVSLHNAEFQGLWPLRTSAELECVCSIFNIEKDICTKYVQFGHVFNLLHSIISYVRKHQGGYGVVAVSDKYSKQTLSRYPIFWSLVHISGLPNPDPSDLKLLNHLTDDPVDVDFVLEAKRKLLKKQTQEWANLDVDPSAQLLVFVGRWSHQKGIDLIADLAPKLLTEHNVQLITIGPVIDLHGQFAAEKLEQIAKRFPTRVLCKPVFTAVPPFLFAGTDFALIPSRDEPFGLVAVEFGRKGVLCIGSRTGGLGHMPGWWFQMASPNTGHLLTQFENAITKALHSNGELRARLRVEALRQRFPVCIWKQKSENLLKSCIYVHEMETLKHASPTFKAYQFVVRICHYLTSKVKSINKDQVFNAFSPDVSERPPLFEVASCSNETDSVEKLTPELSVSPESDMHFKDGNSSKLEIVESKEIYASDSDISNSTSEDINKDECVSKDIEVDNFALNLQSQSYEGDSNDFGIREVPLSDANQSSQADSTSIDRYGPYSSQKVNFSKYKDFVESRPTFFQSSVTFTDADGSTRKTFSKRLENLTTSNTLKSLSVDHFIRKHERKYFNGLRKQEIDVKLKSRSDKEKSCTVSESYKQIDCDTYEATRLQKLLLHSIGGWPLYTIVLAIGQILGASSYQLTLLSGESAQSTVSMYILLSIFSFFSLFWWFLSRVVQARYILSLPFFFFGISFILVAITHFFQKTTACSVIQHIAAYVYAISSSTGSLYFAWNFGAEGGIATHHWILRACLVHGIQQIWSAILWSWGDLLSKKDLTQNVGPGIFAGGLIASFICFGLSYVTFAGLPAFYRQAPSIIPAFYRSLGKRNIVIWFFISQILINYWLAVPYGQAWRFFWNTSNTPLWSIIILLLIFFIVVWAVLLSVIKILSLNNVWFPVIFGLGLICPRWCLEFWSSSGLGINLPWAGKASALLTKSVWLLLALWDGIQGVGVGVMLLQTLARDHVAFTLMLAQVISCITIMIAKPSLPVSDRVFPNLGAWNPSEGPGPCASPCFYIALICQFVAVGGLLYHYRKSQLAL.

Residues 1786–1813 are disordered; that stretch reads SNDFGIREVPLSDANQSSQADSTSIDRY. Residues 1798–1813 are compositionally biased toward polar residues; the sequence is DANQSSQADSTSIDRY.

It belongs to the glycosyltransferase group 1 family.

It carries out the reaction [(1-&gt;3)-alpha-D-glucosyl](n) + UDP-alpha-D-glucose = [(1-&gt;3)-alpha-D-glucosyl](n+1) + UDP + H(+). In Schizosaccharomyces pombe (strain 972 / ATCC 24843) (Fission yeast), this protein is Cell wall alpha-1,3-glucan synthase mok12 (mok12).